The sequence spans 350 residues: UDP-3-O-acylglucosamine N-acyltransferase (350 aa).

Residue His-244 is the Proton acceptor of the active site.

The protein belongs to the transferase hexapeptide repeat family. LpxD subfamily. Homotrimer.

The enzyme catalyses a UDP-3-O-[(3R)-3-hydroxyacyl]-alpha-D-glucosamine + a (3R)-hydroxyacyl-[ACP] = a UDP-2-N,3-O-bis[(3R)-3-hydroxyacyl]-alpha-D-glucosamine + holo-[ACP] + H(+). It participates in bacterial outer membrane biogenesis; LPS lipid A biosynthesis. Its function is as follows. Catalyzes the N-acylation of UDP-3-O-acylglucosamine using 3-hydroxyacyl-ACP as the acyl donor. Is involved in the biosynthesis of lipid A, a phosphorylated glycolipid that anchors the lipopolysaccharide to the outer membrane of the cell. The sequence is that of UDP-3-O-acylglucosamine N-acyltransferase from Janthinobacterium sp. (strain Marseille) (Minibacterium massiliensis).